The following is a 302-amino-acid chain: Cobalt-precorrin-6A reductase (302 aa).

Basic and acidic residues predominate over residues 1 to 10 (MQTPEIKEGT). The interval 1–37 (MQTPEIKEGTEQYLWRRKTMNPGDKGVKRKGSDRQRE) is disordered.

This sequence belongs to the precorrin-6x reductase family.

It catalyses the reaction Co-precorrin-6B + NAD(+) = Co-precorrin-6A + NADH + H(+). It participates in cofactor biosynthesis; adenosylcobalamin biosynthesis; cob(II)yrinate a,c-diamide from sirohydrochlorin (anaerobic route): step 7/10. Functionally, catalyzes the reduction of the macrocycle of cobalt-precorrin-6A to cobalt-precorrin-6B. This chain is Cobalt-precorrin-6A reductase (cbiJ), found in Methanothermobacter thermautotrophicus (strain ATCC 29096 / DSM 1053 / JCM 10044 / NBRC 100330 / Delta H) (Methanobacterium thermoautotrophicum).